A 525-amino-acid chain; its full sequence is Beta-galactoside alpha-2,6-sialyltransferase 2 (525 aa).

Residues 1–11 (MKPHLKQWRQR) lie on the Cytoplasmic side of the membrane. Residues 12 to 32 (MLFAIFVWGLLFLAIFIYFTN) traverse the membrane as a helical; Signal-anchor for type II membrane protein segment. The Lumenal segment spans residues 33 to 525 (SNPAAPMPSS…PVTRPNNTNT (493 aa)). Disordered stretches follow at residues 85-107 (SASPFNSWPGDPQKGDQAQDGFD) and 145-183 (RQGALGLPSPGESSWQSGPGQPKQEKLRHPRRGSLPEEA). 3 disulfides stabilise this stretch: Cys249–Cys515, Cys292–Cys444, and Cys462–Cys473. N-linked (GlcNAc...) asparagine glycosylation is found at Asn303 and Asn333. A glycan (N-linked (GlcNAc...) asparagine) is linked at Asn521.

Belongs to the glycosyltransferase 29 family.

The protein localises to the golgi apparatus. It is found in the golgi stack membrane. It carries out the reaction a beta-D-galactoside + CMP-N-acetyl-beta-neuraminate = an N-acetyl-alpha-neuraminyl-(2-&gt;6)-beta-D-galactosyl derivative + CMP + H(+). Transfers sialic acid from the donor of substrate CMP-sialic acid to galactose containing acceptor substrates. Has alpha-2,6-sialyltransferase activity toward oligosaccharides that have the Gal-beta-1,4-GlcNAc sequence at the non-reducing end of their carbohydrate groups, but it has weak or no activities toward glycoproteins and glycolipids. The polypeptide is Beta-galactoside alpha-2,6-sialyltransferase 2 (St6gal2) (Rattus norvegicus (Rat)).